The sequence spans 130 residues: Albumin-1 A (130 aa).

The first 26 residues, 1–26 (MASVKLASLIVLFATLGMFLTKNVGA), serve as a signal peptide directing secretion. 3 disulfide bridges follow: Cys29–Cys46, Cys33–Cys48, and Cys41–Cys58. 2 consecutive propeptides follow at residues 64–69 (VFLRTN) and 123–130 (LLKSVSTA).

The C-terminal glycine may be removed from PA1b. Major component of both the cotyledons and embryonic axes of mature seeds.

In terms of biological role, PA1b binds to basic 7S globulin (BG) and stimulates its phosphorylation activity. Involved in the signal transduction system to regulate the growth and differentiation as a hormone peptide. Toxic to various insects through binding to a high affinity binding site in the insect gut. The chain is Albumin-1 A from Pisum sativum (Garden pea).